A 278-amino-acid chain; its full sequence is Elongation factor Ts (278 aa).

The segment at threonine 82–valine 85 is involved in Mg(2+) ion dislocation from EF-Tu.

The protein belongs to the EF-Ts family.

The protein resides in the cytoplasm. Associates with the EF-Tu.GDP complex and induces the exchange of GDP to GTP. It remains bound to the aminoacyl-tRNA.EF-Tu.GTP complex up to the GTP hydrolysis stage on the ribosome. The polypeptide is Elongation factor Ts (tsf) (Streptomyces ramocissimus).